Here is a 129-residue protein sequence, read N- to C-terminus: Mediator of RNA polymerase II transcription subunit 31-B (129 aa).

The protein belongs to the Mediator complex subunit 31 family. As to quaternary structure, component of the Mediator complex.

It is found in the nucleus. In terms of biological role, component of the Mediator complex, a coactivator involved in the regulated transcription of nearly all RNA polymerase II-dependent genes. Mediator functions as a bridge to convey information from gene-specific regulatory proteins to the basal RNA polymerase II transcription machinery. Mediator is recruited to promoters by direct interactions with regulatory proteins and serves as a scaffold for the assembly of a functional preinitiation complex with RNA polymerase II and the general transcription factors. The protein is Mediator of RNA polymerase II transcription subunit 31-B (med31-b) of Xenopus laevis (African clawed frog).